The sequence spans 268 residues: Protein limb expression 1 homolog (268 aa).

The protein belongs to the LIX1 family. As to quaternary structure, interacts with ft (via intracellular domain) and ds (via intracellular domain).

It is found in the apical cell membrane. The protein localises to the cytoplasm. Its function is as follows. Component of the Fat (ft) signaling pathway that functions in normal development of various organs such as the wing and leg. In developing imaginal disks, involved in regulating both the protein levels and apical localization of ft and ds. Involved in establishing planar cell polarity (PCP) along the anterior-posterior axis of the wing (the early Fz signaling event), probably by acting upstream of ds and ft to regulate Fz activity. This is Protein limb expression 1 homolog from Drosophila melanogaster (Fruit fly).